Reading from the N-terminus, the 301-residue chain is Troponin T, cardiac muscle (301 aa).

The span at 1-72 (MSDAEEVVEE…EAKDAEEGPV (72 aa)) shows a compositional bias: acidic residues. Disordered stretches follow at residues 1–97 (MSDA…DGER) and 125–224 (NRKK…KKKI). An N-acetylserine modification is found at Ser2. Ser2 carries the phosphoserine; by CK2 modification. Basic and acidic residues-rich tracts occupy residues 125–186 (NRKK…DEAR) and 206–224 (QTER…KKKI). Thr207 is subject to Phosphothreonine; by PKC/PRKCA. Ser211 bears the Phosphoserine; by PKC/PRKCA mark. The residue at position 216 (Thr216) is a Phosphothreonine; by PKC/PRKCA and RAF1. Phosphothreonine; by PKC/PRKCA is present on Thr297.

It belongs to the troponin T family. Phosphorylation at Thr-216 by PRKCA induces significant reduction in myofilament calcium sensitivity and actomyosin ATPase activity.

Its function is as follows. Troponin T is the tropomyosin-binding subunit of troponin, the thin filament regulatory complex which confers calcium-sensitivity to striated muscle actomyosin ATPase activity. The protein is Troponin T, cardiac muscle (Tnnt2) of Mus musculus (Mouse).